We begin with the raw amino-acid sequence, 354 residues long: Transcription factor HHO2 (354 aa).

Over residues 93–102 (VQEEEEEDGE) the composition is skewed to acidic residues. Positions 93–112 (VQEEEEEDGEHESSPELVNN) are disordered. Residues 103 to 112 (HESSPELVNN) are compositionally biased toward basic and acidic residues. One can recognise an HTH myb-type domain in the interval 212–272 (THRKQRRCWS…HLQKYRLHTR (61 aa)). Residues 243 to 268 (PKQIRDHMKVDGLTNDEVKSHLQKYR) constitute a DNA-binding region (H-T-H motif). The disordered stretch occupies residues 324 to 354 (VAQSPKRSLERSCNSPAASSSTNTNTSTPVS). Residues 337–354 (NSPAASSSTNTNTSTPVS) show a composition bias toward low complexity.

It localises to the nucleus. Functionally, probable transcription factor involved in phosphate homeostasis. Involved in the regulation of the developmental response of lateral roots, acquisition and/or mobilization of phosphate and expression of a subset of genes involved in phosphate sensing and signaling pathway. Is a target of the transcription factor PHR1. This Arabidopsis thaliana (Mouse-ear cress) protein is Transcription factor HHO2.